The sequence spans 1423 residues: Protein Shroom2 (1423 aa).

A disordered region spans residues 1 to 101 (MRPSTVTSRI…PDHTLPKADA (101 aa)). Low complexity predominate over residues 8–27 (SRIWWSESSSSSSHDLSGSW). 2 stretches are compositionally biased toward polar residues: residues 28-69 (EHTS…NSSI) and 83-93 (GSFSTCSSTPD). The residue at position 103 (S103) is a Phosphoserine. The segment at 116–171 (ASRPGSSRQSQSTGDPQGLQDRPSSFLPRVPGNSSKSPRPEDNIEPKIATSGRSNF) is disordered. The segment covering 119-130 (PGSSRQSQSTGD) has biased composition (polar residues). S185, S197, and S291 each carry phosphoserine. Disordered stretches follow at residues 300–357 (SYHG…VNQK), 586–630 (TSFQ…SAPR), 758–855 (EILS…SGGQ), 872–930 (PSSS…KLTD), and 1045–1085 (VETP…KEKT). Residues 575-677 (LKEAQTRVLK…SEPEKINEVG (103 aa)) enclose the ASD1 domain. Basic and acidic residues predominate over residues 761 to 771 (SEDRKVEKASE). 4 positions are modified to phosphoserine: S806, S830, S831, and S833. T834 carries the post-translational modification Phosphothreonine. A compositionally biased stretch (low complexity) spans 872-885 (PSSSVLSSAQPQDS). Positions 891 to 923 (DPTSPQPEAQLSSKCQHLQTSTMETSRSPSPQF) are enriched in polar residues. A phosphoserine mark is found at S918 and S920. Pro residues predominate over residues 1054–1065 (PEPQPPSTPAPP). 2 positions are modified to phosphoserine: S1072 and S1329. The 327-residue stretch at 1092 to 1418 (EELAREIVGK…QLKCLFDSLQ (327 aa)) folds into the ASD2 domain.

The protein belongs to the shroom family. In terms of assembly, interacts with F-actin.

It localises to the apical cell membrane. The protein localises to the cell junction. Its subcellular location is the tight junction. It is found in the cytoplasm. The protein resides in the cytoskeleton. May be involved in endothelial cell morphology changes during cell spreading. In the retinal pigment epithelium, may regulate the biogenesis of melanosomes and promote their association with the apical cell surface by inducing gamma-tubulin redistribution. The polypeptide is Protein Shroom2 (Shroom2) (Rattus norvegicus (Rat)).